Reading from the N-terminus, the 290-residue chain is tRNA (guanine-N(7)-)-methyltransferase (290 aa).

Composition is skewed to basic and acidic residues over residues M1–R12 and A20–K43. Residues M1–S49 are disordered. S-adenosyl-L-methionine-binding residues include E104, D129, D156, and D179. Residue D179 is part of the active site. Substrate contacts are provided by residues K183, D215, and T252–E255.

This sequence belongs to the class I-like SAM-binding methyltransferase superfamily. TrmB family.

The enzyme catalyses guanosine(46) in tRNA + S-adenosyl-L-methionine = N(7)-methylguanosine(46) in tRNA + S-adenosyl-L-homocysteine. The protein operates within tRNA modification; N(7)-methylguanine-tRNA biosynthesis. Its function is as follows. Catalyzes the formation of N(7)-methylguanine at position 46 (m7G46) in tRNA. This is tRNA (guanine-N(7)-)-methyltransferase from Streptomyces avermitilis (strain ATCC 31267 / DSM 46492 / JCM 5070 / NBRC 14893 / NCIMB 12804 / NRRL 8165 / MA-4680).